The primary structure comprises 426 residues: Adenylosuccinate synthetase (426 aa).

GTP-binding positions include Gly-12–Lys-18 and Gly-40–Thr-42. Asp-13 acts as the Proton acceptor in catalysis. 2 residues coordinate Mg(2+): Asp-13 and Gly-40. Residues Asp-13 to Lys-16, Asn-38 to His-41, Thr-128, Arg-142, Gln-223, Thr-238, and Arg-302 contribute to the IMP site. Catalysis depends on His-41, which acts as the Proton donor. A substrate-binding site is contributed by Thr-298 to Arg-304. GTP is bound by residues Arg-304, Lys-330–Asp-332, and Ser-412–Gly-414.

The protein belongs to the adenylosuccinate synthetase family. Homodimer. The cofactor is Mg(2+).

It localises to the cytoplasm. It carries out the reaction IMP + L-aspartate + GTP = N(6)-(1,2-dicarboxyethyl)-AMP + GDP + phosphate + 2 H(+). The protein operates within purine metabolism; AMP biosynthesis via de novo pathway; AMP from IMP: step 1/2. Functionally, plays an important role in the de novo pathway of purine nucleotide biosynthesis. Catalyzes the first committed step in the biosynthesis of AMP from IMP. This Thermoanaerobacter pseudethanolicus (strain ATCC 33223 / 39E) (Clostridium thermohydrosulfuricum) protein is Adenylosuccinate synthetase.